A 32-amino-acid polypeptide reads, in one-letter code: Photosystem I reaction center subunit XII (32 aa).

The chain crosses the membrane as a helical span at residues valine 9–tyrosine 31.

Belongs to the PsaM family.

It is found in the plastid. The protein resides in the chloroplast thylakoid membrane. The polypeptide is Photosystem I reaction center subunit XII (Chaetosphaeridium globosum (Charophycean green alga)).